A 137-amino-acid polypeptide reads, in one-letter code: Transcription antitermination protein NusB (137 aa).

This sequence belongs to the NusB family.

Functionally, involved in transcription antitermination. Required for transcription of ribosomal RNA (rRNA) genes. Binds specifically to the boxA antiterminator sequence of the ribosomal RNA (rrn) operons. The polypeptide is Transcription antitermination protein NusB (Actinobacillus pleuropneumoniae serotype 5b (strain L20)).